The sequence spans 138 residues: Large ribosomal subunit protein uL16 (138 aa).

It belongs to the universal ribosomal protein uL16 family. Part of the 50S ribosomal subunit.

Functionally, binds 23S rRNA and is also seen to make contacts with the A and possibly P site tRNAs. This is Large ribosomal subunit protein uL16 from Ureaplasma parvum serovar 3 (strain ATCC 27815 / 27 / NCTC 11736).